The following is a 339-amino-acid chain: MKNWINEECNKEDIVINSNISLSRNLKEKPFSNKLNEIEARENVGFIYQIVKSELKDESCIYQLWNEDKELINSYLDKQLISKELIKNKDKTAFVLNSEETLSIMINEDDHLKLRCITAGFDLETAFDNITKLDDKIEKRVHYAFDENLGYLTTSPTNLGTGMRASVNIHLPALNFNDEISNFSKGLTQIGMDMKGLYEEGNKAYGNMYKISNQVTLGLTEEEIIDNLKGAVLNVISEEKKFREVLLTKCKYDIEDKVFRAYGILTSAILLSEKECTELLSSVRFGVELSLLDISKNKLNKLLVYTRDSSLQNYLKRKLSNKELNYERAKFVRAILAQN.

The Phosphagen kinase C-terminal domain occupies 14-242 (IVINSNISLS…LNVISEEKKF (229 aa)). Residues 17-21 (NSNIS), 164-168 (RASVN), and 195-200 (KGLYEE) each bind ATP.

It belongs to the ATP:guanido phosphotransferase family.

The catalysed reaction is L-arginyl-[protein] + ATP = N(omega)-phospho-L-arginyl-[protein] + ADP + H(+). Functionally, catalyzes the specific phosphorylation of arginine residues in proteins. The protein is Protein-arginine kinase of Clostridium botulinum (strain Eklund 17B / Type B).